The following is a 177-amino-acid chain: Coatomer subunit zeta-1 (177 aa).

Methionine 1 is subject to N-acetylmethionine.

This sequence belongs to the adaptor complexes small subunit family. Oligomeric complex that consists of at least the alpha, beta, beta', gamma, delta, epsilon and zeta subunits.

It is found in the cytoplasm. The protein localises to the golgi apparatus membrane. Its subcellular location is the cytoplasmic vesicle. It localises to the COPI-coated vesicle membrane. Its function is as follows. The coatomer is a cytosolic protein complex that binds to dilysine motifs and reversibly associates with Golgi non-clathrin-coated vesicles, which further mediate biosynthetic protein transport from the ER, via the Golgi up to the trans Golgi network. Coatomer complex is required for budding from Golgi membranes, and is essential for the retrograde Golgi-to-ER transport of dilysine-tagged proteins. The zeta subunit may be involved in regulating the coat assembly and, hence, the rate of biosynthetic protein transport due to its association-dissociation properties with the coatomer complex. This is Coatomer subunit zeta-1 (COPZ1) from Bos taurus (Bovine).